A 114-amino-acid chain; its full sequence is SNF1-related protein kinase regulatory subunit beta-3 (114 aa).

The tract at residues S26 to H50 is disordered. Residues D40–V114 form an association with SNF1 complex (ASC) region.

This sequence belongs to the 5'-AMP-activated protein kinase beta subunit family. In terms of assembly, subunit of a probable heterotrimeric complex consisting of an alpha catalytic (KIN10 or KIN11) subunit, and a beta (KINB) and a gamma (KING or SNF4) non-catalytic regulatory subunits. Interacts with KIN10, KIN11 and SNF4. Interacts with FLZ1, FLZ2, FLZ3, FLZ4, FLZ5, FLZ7, FLZ8, FLZ10, FLZ13, FLZ14, FLZ15 and FLZ16. In terms of tissue distribution, expressed in rosette (at the protein level). Expressed in the whole plant and at the different developmental stage with a higher level in stems.

In terms of biological role, regulatory subunit of the probable trimeric SNF1-related protein kinase (SnRK) complex, which may play a role in a signal transduction cascade regulating gene expression and carbohydrate metabolism in higher plants. In Arabidopsis thaliana (Mouse-ear cress), this protein is SNF1-related protein kinase regulatory subunit beta-3 (KINB3).